A 374-amino-acid polypeptide reads, in one-letter code: Histidinol-phosphate aminotransferase 2 (374 aa).

K227 is subject to N6-(pyridoxal phosphate)lysine.

Belongs to the class-II pyridoxal-phosphate-dependent aminotransferase family. Histidinol-phosphate aminotransferase subfamily. As to quaternary structure, homodimer. Pyridoxal 5'-phosphate is required as a cofactor.

The enzyme catalyses L-histidinol phosphate + 2-oxoglutarate = 3-(imidazol-4-yl)-2-oxopropyl phosphate + L-glutamate. Its pathway is amino-acid biosynthesis; L-histidine biosynthesis; L-histidine from 5-phospho-alpha-D-ribose 1-diphosphate: step 7/9. This Ralstonia nicotianae (strain ATCC BAA-1114 / GMI1000) (Ralstonia solanacearum) protein is Histidinol-phosphate aminotransferase 2 (hisC2).